We begin with the raw amino-acid sequence, 1232 residues long: Chromosome-associated kinesin KIF4A (1232 aa).

Residues 9–336 form the Kinesin motor domain; sequence PVRVALRCRP…LRYADRARKI (328 aa). Residue 88–95 participates in ATP binding; that stretch reads GQTGSGKT. Positions 350 to 999 form a coiled coil; the sequence is ELNHLKQQVQ…IKQKLTLLQV (650 aa). Serine 394 carries the post-translational modification Phosphoserine. The disordered stretch occupies residues 496 to 515; that stretch reads AQVETSPETSRSSDAFTTQH. Positions 497 to 515 are enriched in polar residues; it reads QVETSPETSRSSDAFTTQH. The tract at residues 663 to 1232 is required for the interaction with PRC1; sequence QWKQKKDKEV…GCSPIEEEAH (570 aa). A Nuclear localization signal motif is present at residues 793–798; it reads PKLRRR. Threonine 799 is modified (phosphothreonine). Phosphoserine is present on residues serine 801, serine 810, serine 815, and serine 951. At threonine 995 the chain carries Phosphothreonine. The globular stretch occupies residues 1000-1232; it reads ASRQKHLPKD…GCSPIEEEAH (233 aa). Serine 1001, serine 1013, serine 1017, serine 1028, and serine 1126 each carry phosphoserine. The CRD; required for [4Fe-4S] cluster binding and localization to the spindle midzone and midbody during anaphase and telophase stretch occupies residues 1086–1144; it reads CSCKGWCGNKQCGCRKQKSDCGVDCCCDPTKCRNRQQGKDSLGTVERTQDSEGSFKLED. The interval 1122-1142 is disordered; it reads QGKDSLGTVERTQDSEGSFKL. The span at 1132-1142 shows a compositional bias: basic and acidic residues; it reads RTQDSEGSFKL. Residue threonine 1181 is modified to Phosphothreonine. Serine 1186 bears the Phosphoserine mark. Lysine 1194 participates in a covalent cross-link: Glycyl lysine isopeptide (Lys-Gly) (interchain with G-Cter in SUMO2). Serine 1225 is modified (phosphoserine).

It belongs to the TRAFAC class myosin-kinesin ATPase superfamily. Kinesin family. Chromokinesin subfamily. Interacts with the cytosolic iron-sulfur protein assembly (CIA) complex components CIAO2B and MMS19; the interactions facilitate the transfer of Fe-S clusters to KIF4A to ensure proper localization of KIF4A to mitotic machinery components. Interacts (via C-terminus) with unphosphorylated PRC1 (via N-terminus); the interaction is required for the progression of mitosis. [2Fe-2S] cluster is required as a cofactor. The cofactor is [4Fe-4S] cluster. As to expression, highly expressed in hematopoietic tissues, fetal liver, spleen, thymus and adult thymus and bone marrow. Lower levels are found in heart, testis, kidney, colon and lung.

It localises to the nucleus matrix. It is found in the cytoplasm. The protein localises to the cytoskeleton. The protein resides in the spindle. Its subcellular location is the midbody. It localises to the chromosome. Iron-sulfur (Fe-S) cluster binding motor protein that has a role in chromosome segregation during mitosis. Translocates PRC1 to the plus ends of interdigitating spindle microtubules during the metaphase to anaphase transition, an essential step for the formation of an organized central spindle midzone and midbody and for successful cytokinesis. May play a role in mitotic chromosomal positioning and bipolar spindle stabilization. The sequence is that of Chromosome-associated kinesin KIF4A (KIF4A) from Homo sapiens (Human).